A 180-amino-acid chain; its full sequence is Large ribosomal subunit protein uL5 (180 aa).

It belongs to the universal ribosomal protein uL5 family. Part of the 50S ribosomal subunit; part of the 5S rRNA/L5/L18/L25 subcomplex. Contacts the 5S rRNA and the P site tRNA. Forms a bridge to the 30S subunit in the 70S ribosome.

In terms of biological role, this is one of the proteins that bind and probably mediate the attachment of the 5S RNA into the large ribosomal subunit, where it forms part of the central protuberance. In the 70S ribosome it contacts protein S13 of the 30S subunit (bridge B1b), connecting the 2 subunits; this bridge is implicated in subunit movement. Contacts the P site tRNA; the 5S rRNA and some of its associated proteins might help stabilize positioning of ribosome-bound tRNAs. The sequence is that of Large ribosomal subunit protein uL5 from Streptococcus mutans serotype c (strain ATCC 700610 / UA159).